The following is a 524-amino-acid chain: Putative ribose/galactose/methyl galactoside import ATP-binding protein 1 (524 aa).

ABC transporter domains lie at 35-271 and 281-520; these read LEVR…VGRE and VPIG…RIMD. 67 to 74 serves as a coordination point for ATP; the sequence is GENGAGKS.

It belongs to the ABC transporter superfamily. Carbohydrate importer 2 (CUT2) (TC 3.A.1.2) family.

The protein localises to the cell inner membrane. It catalyses the reaction D-ribose(out) + ATP + H2O = D-ribose(in) + ADP + phosphate + H(+). The enzyme catalyses D-galactose(out) + ATP + H2O = D-galactose(in) + ADP + phosphate + H(+). Its function is as follows. Part of an ABC transporter complex involved in carbohydrate import. Could be involved in ribose, galactose and/or methyl galactoside import. Responsible for energy coupling to the transport system. This chain is Putative ribose/galactose/methyl galactoside import ATP-binding protein 1, found in Burkholderia cenocepacia (strain HI2424).